The following is a 99-amino-acid chain: Plastocyanin (99 aa).

Residues 1 to 99 (LDVLLGGDDG…AGMVGKVTVN (99 aa)) enclose the Plastocyanin-like domain. 4 residues coordinate Cu cation: histidine 37, cysteine 84, histidine 87, and methionine 92.

The protein belongs to the plastocyanin family. It depends on Cu(2+) as a cofactor.

The protein localises to the plastid. The protein resides in the chloroplast thylakoid membrane. Functionally, participates in electron transfer between P700 and the cytochrome b6-f complex in photosystem I. The polypeptide is Plastocyanin (PETE) (Solanum tuberosum (Potato)).